A 183-amino-acid polypeptide reads, in one-letter code: Pyruvoyl-dependent arginine decarboxylase 2 (183 aa).

A Pyruvic acid (Ser) modification is found at Ser41.

It belongs to the PdaD family. Pyruvate is required as a cofactor.

It catalyses the reaction L-arginine + H(+) = agmatine + CO2. The chain is Pyruvoyl-dependent arginine decarboxylase 2 (pdaD2) from Methanosarcina mazei (strain ATCC BAA-159 / DSM 3647 / Goe1 / Go1 / JCM 11833 / OCM 88) (Methanosarcina frisia).